The chain runs to 1063 residues: Coiled-coil domain-containing protein 187 (1063 aa).

Disordered regions lie at residues 1–41 (MPTL…AADW), 62–184 (RWPG…SRLH), 219–278 (RVEA…KDED), 300–319 (PPPV…PALT), 392–484 (RKGG…ERLG), 496–539 (GQAC…ATQP), and 551–658 (WEDP…LEEK). Low complexity predominate over residues 111–124 (SSVSSGRLSCSSGG). Residues 146 to 160 (RKSDARLEQLRDKIR) are compositionally biased toward basic and acidic residues. Positions 163-181 (AWQQGSCASLGTSAPSSAS) are enriched in polar residues. Residues 219 to 233 (RVEAKASHGQGRELS) show a composition bias toward basic and acidic residues. Composition is skewed to basic and acidic residues over residues 431–442 (TERKHSSLERAR) and 472–484 (SFQR…ERLG). The segment covering 508 to 517 (QRQGPSSQRP) has biased composition (low complexity). Positions 816–851 (HLRHKQAQLQALETTAKVLKQRVDSLTAKLQGAEAL) form a coiled coil. Positions 1010–1030 (PRSCGKGDPADRPWAGWSGGR) are disordered.

In Homo sapiens (Human), this protein is Coiled-coil domain-containing protein 187.